Here is a 220-residue protein sequence, read N- to C-terminus: Metalloproteinase inhibitor 2 (220 aa).

The N-terminal stretch at 1-26 is a signal peptide; sequence MGATARSLRLALGLLLLGTLPRGADA. Position 27 (C27) interacts with Zn(2+). Involved in metalloproteinase-binding regions lie at residues 27–30 and 95–96; these read CSCS and SA. 6 disulfides stabilise this stretch: C27-C98, C29-C127, C39-C152, C154-C201, C159-C164, and C172-C193. Positions 27 to 152 constitute an NTR domain; it reads CSCSPVHPQQ…SLNHRYQMGC (126 aa).

It belongs to the protease inhibitor I35 (TIMP) family. As to quaternary structure, interacts (via the C-terminal) with MMP2 (via the C-terminal PEX domain); the interaction inhibits the MMP2 activity. In terms of processing, the activity of TIMP2 is dependent on the presence of disulfide bonds. Predominantly expressed in the lung in alveolar macrophages and epithelial cells. Also found in brain, kidney, intestine, spleen and heart.

Its subcellular location is the secreted. Functionally, complexes with metalloproteinases (such as collagenases) and irreversibly inactivates them by binding to their catalytic zinc cofactor. The polypeptide is Metalloproteinase inhibitor 2 (TIMP2) (Cavia porcellus (Guinea pig)).